Here is a 125-residue protein sequence, read N- to C-terminus: Large ribosomal subunit protein uL22 (125 aa).

Belongs to the universal ribosomal protein uL22 family. As to quaternary structure, part of the 50S ribosomal subunit.

In terms of biological role, this protein binds specifically to 23S rRNA; its binding is stimulated by other ribosomal proteins, e.g. L4, L17, and L20. It is important during the early stages of 50S assembly. It makes multiple contacts with different domains of the 23S rRNA in the assembled 50S subunit and ribosome. Functionally, the globular domain of the protein is located near the polypeptide exit tunnel on the outside of the subunit, while an extended beta-hairpin is found that lines the wall of the exit tunnel in the center of the 70S ribosome. This Novosphingobium aromaticivorans (strain ATCC 700278 / DSM 12444 / CCUG 56034 / CIP 105152 / NBRC 16084 / F199) protein is Large ribosomal subunit protein uL22.